A 601-amino-acid polypeptide reads, in one-letter code: Group B oligopeptidase PepB (601 aa).

Histidine 386 lines the Zn(2+) pocket. The active site involves glutamate 387. Zn(2+) contacts are provided by histidine 390 and histidine 393.

This sequence belongs to the peptidase M3B family. Zn(2+) serves as cofactor.

The protein localises to the cytoplasm. Functionally, has oligopeptidase activity and degrades a variety of small bioactive peptides, including bradykinin, neurotensin, and peptide fragments of substance P and adrenocorticotropin. Also hydrolyzes the synthetic collagen-like substrate N-(3-[2-furyl]acryloyl)-Leu-Gly-Pro-Ala (FALGPA). This chain is Group B oligopeptidase PepB (pepB), found in Streptococcus agalactiae serotype III (strain NEM316).